The sequence spans 279 residues: 1D-myo-inositol 2-acetamido-2-deoxy-alpha-D-glucopyranoside deacetylase (279 aa).

Positions 12, 15, and 146 each coordinate Zn(2+).

It belongs to the MshB deacetylase family. Zn(2+) serves as cofactor.

It catalyses the reaction 1D-myo-inositol 2-acetamido-2-deoxy-alpha-D-glucopyranoside + H2O = 1D-myo-inositol 2-amino-2-deoxy-alpha-D-glucopyranoside + acetate. In terms of biological role, catalyzes the deacetylation of 1D-myo-inositol 2-acetamido-2-deoxy-alpha-D-glucopyranoside (GlcNAc-Ins) in the mycothiol biosynthesis pathway. This Mycobacteroides abscessus (strain ATCC 19977 / DSM 44196 / CCUG 20993 / CIP 104536 / JCM 13569 / NCTC 13031 / TMC 1543 / L948) (Mycobacterium abscessus) protein is 1D-myo-inositol 2-acetamido-2-deoxy-alpha-D-glucopyranoside deacetylase.